Consider the following 589-residue polypeptide: Protein kinase G11A (589 aa).

Residues 1–167 (MASKAMPRAP…SACSSISSVT (167 aa)) form a disordered region. Polar residues-rich tracts occupy residues 15 to 36 (NLQS…SPSK), 46 to 55 (AESSKPNSEV), and 63 to 76 (TQHQ…TGSN). A compositionally biased stretch (basic and acidic residues) spans 91–100 (RLADEEKGVV). Positions 142 to 165 (SSSRCRPSTSSDVSDESACSSISS) are enriched in low complexity. Residues 195–533 (FKLLKKLGCG…ATEIKQHPFF (339 aa)) form the Protein kinase domain. ATP is bound by residues 201–209 (LGCGDIGSV) and K224. The active-site Proton acceptor is D320. The interval 551 to 589 (RPVEIERPPKQPVSTSEPAAAPSDAAQKSSDSYLEFDFF) is disordered.

The protein belongs to the protein kinase superfamily. Ser/Thr protein kinase family.

It carries out the reaction L-seryl-[protein] + ATP = O-phospho-L-seryl-[protein] + ADP + H(+). The enzyme catalyses L-threonyl-[protein] + ATP = O-phospho-L-threonyl-[protein] + ADP + H(+). May play a role in the regulation of metabolism and signal transduction processes. The chain is Protein kinase G11A from Oryza sativa subsp. indica (Rice).